The chain runs to 214 residues: Variable small protein 24 (214 aa).

Positions 1 to 18 are cleaved as a signal peptide; that stretch reads MRKRISAIIMTLFMVFMS. C19 is lipidated: N-palmitoyl cysteine. Residue C19 is the site of S-diacylglycerol cysteine attachment. Residues 146-172 are disordered; that stretch reads TELGKKDASDDDTKKAIKKDNSDKTKG.

This sequence belongs to the variable small protein (Vsp) family.

The protein localises to the cell outer membrane. In terms of biological role, the Vlp and Vsp proteins are antigenically distinct proteins, only one vlp or vsp gene is transcriptionally active at any one time. Switching between these genes is a mechanism of host immune response evasion. This is Variable small protein 24 from Borrelia hermsii.